Here is a 413-residue protein sequence, read N- to C-terminus: PCI domain-containing protein 2 homolog (413 aa).

The region spanning 222-403 (VAYNYFLGRK…QKLVISKTNA (182 aa)) is the PCI domain.

This sequence belongs to the CSN12 family.

This chain is PCI domain-containing protein 2 homolog, found in Caenorhabditis briggsae.